We begin with the raw amino-acid sequence, 144 residues long: Glycine-rich protein DC9.1 (144 aa).

A helical transmembrane segment spans residues Ile5–Ala25. Tandem repeats lie at residues Gly37–Gly42, Gly43–Gly48, Gly50–Gly55, Gly56–Gly61, Gly63–Gly68, Gly69–Gly74, Gly76–Gly81, Gly82–Gly87, Gly89–Gly94, Gly102–Gly107, and Gly108–Gly113. The segment at Gly37 to Gly113 is 11 X 6 AA tandem repeats of G-Y-[NH]-N-G -G.

The protein belongs to the GRP family.

The protein localises to the membrane. The protein is Glycine-rich protein DC9.1 of Daucus carota (Wild carrot).